Consider the following 152-residue polypeptide: Methylglyoxal synthase (152 aa).

The 148-residue stretch at 5 to 152 folds into the MGS-like domain; sequence TRTVQAQKHI…YQLYLQQRLK (148 aa). Substrate-binding positions include histidine 19, lysine 23, 45–48, and 65–66; these read TGTT and SG. The active-site Proton donor/acceptor is the aspartate 71. Histidine 98 is a substrate binding site.

It belongs to the methylglyoxal synthase family.

It carries out the reaction dihydroxyacetone phosphate = methylglyoxal + phosphate. In terms of biological role, catalyzes the formation of methylglyoxal from dihydroxyacetone phosphate. The sequence is that of Methylglyoxal synthase from Erwinia tasmaniensis (strain DSM 17950 / CFBP 7177 / CIP 109463 / NCPPB 4357 / Et1/99).